The chain runs to 439 residues: Serine/threonine-protein kinase 2 (439 aa).

Residues 87–439 enclose the Protein kinase domain; sequence NDDFYHISTG…IFSDWINGGN (353 aa). ATP contacts are provided by residues 93 to 101 and K117; that span reads ISTGGYGIV. The Proton acceptor role is filled by D307.

The protein belongs to the protein kinase superfamily. Ser/Thr protein kinase family. Post-translationally, phosphorylated in vivo. Autophosphorylated in vitro.

The protein localises to the host endoplasmic reticulum. It is found in the host endoplasmic reticulum-Golgi intermediate compartment. The catalysed reaction is L-seryl-[protein] + ATP = O-phospho-L-seryl-[protein] + ADP + H(+). It catalyses the reaction L-threonyl-[protein] + ATP = O-phospho-L-threonyl-[protein] + ADP + H(+). Essential serine-protein kinase involved in the early stage of virion morphogenesis. The protein is Serine/threonine-protein kinase 2 (OPG054) of Vaccinia virus (strain Tian Tan) (VACV).